Here is a 219-residue protein sequence, read N- to C-terminus: Probable GTP-binding protein EngB (219 aa).

In terms of domain architecture, EngB-type G spans 24–207; sequence VQPEIAFAGR…HELIESWLRP (184 aa). GTP-binding positions include 32–39, 59–63, 81–84, 148–151, and 186–188; these read GRSNAGKS, GRTQH, DLPG, TKCD, and FSA. Mg(2+) contacts are provided by Ser-39 and Thr-61.

The protein belongs to the TRAFAC class TrmE-Era-EngA-EngB-Septin-like GTPase superfamily. EngB GTPase family. The cofactor is Mg(2+).

In terms of biological role, necessary for normal cell division and for the maintenance of normal septation. In Burkholderia vietnamiensis (strain G4 / LMG 22486) (Burkholderia cepacia (strain R1808)), this protein is Probable GTP-binding protein EngB.